A 463-amino-acid polypeptide reads, in one-letter code: Glutamate--tRNA ligase 2 (463 aa).

Residues 10–20 (PSPTGYLHIGG) carry the 'HIGH' region motif. The short motif at 238 to 242 (KLSKR) is the 'KMSKS' region element. Lysine 241 lines the ATP pocket.

Belongs to the class-I aminoacyl-tRNA synthetase family. Glutamate--tRNA ligase type 1 subfamily. In terms of assembly, monomer.

It localises to the cytoplasm. The enzyme catalyses tRNA(Glu) + L-glutamate + ATP = L-glutamyl-tRNA(Glu) + AMP + diphosphate. In terms of biological role, catalyzes the attachment of glutamate to tRNA(Glu) in a two-step reaction: glutamate is first activated by ATP to form Glu-AMP and then transferred to the acceptor end of tRNA(Glu). The chain is Glutamate--tRNA ligase 2 from Helicobacter acinonychis (strain Sheeba).